A 262-amino-acid polypeptide reads, in one-letter code: MQTIIRVEKLAKTFNQHQALHAVDLNIHHSEMVALLGPSGSGKSTLLRHLSGLITGDKSAGSHIELLGRTVQREGRLARDIRKSRAHTGYIFQQFNLVNRLSVLENVLIGALGSTPFWRTCFSWFTREQKQRALQALTRVGMVHFAHQRVSTLSGGQQQRVAIARALMQQAKVILADEPIASLDPESARIVMDTLRDINQNDGITVVVTLHQVDYALRYCERIVALRQGHVFYDGSSQQFDNERFDHLYRSINRIEENAKAA.

In terms of domain architecture, ABC transporter spans 5–253; that stretch reads IRVEKLAKTF…RFDHLYRSIN (249 aa). 37–44 serves as a coordination point for ATP; that stretch reads GPSGSGKS.

The protein belongs to the ABC transporter superfamily. Phosphonates importer (TC 3.A.1.9.1) family. As to quaternary structure, the complex is composed of two ATP-binding proteins (PhnC), two transmembrane proteins (PhnE) and a solute-binding protein (PhnD).

The protein resides in the cell inner membrane. The enzyme catalyses phosphonate(out) + ATP + H2O = phosphonate(in) + ADP + phosphate + H(+). Part of the ABC transporter complex PhnCDE involved in phosphonates import. Responsible for energy coupling to the transport system. This Shigella boydii serotype 4 (strain Sb227) protein is Phosphonates import ATP-binding protein PhnC.